The following is a 155-amino-acid chain: MRRRRAEPRVVSPDPVYGEVLVTRMVNKIMWDGKKSIAQKIVYGAIDILSQKTGKDGIEVFKQAIENVKPIVEVRPRRIGGATYQVPVEVQEPRKTTLAIRWIVDIARSKKGKPMQEKLAEELLNAYNNTGAAIKKREDVHKMAEANRAFAHFRW.

It belongs to the universal ribosomal protein uS7 family. As to quaternary structure, part of the 30S ribosomal subunit. Contacts proteins S9 and S11.

Its function is as follows. One of the primary rRNA binding proteins, it binds directly to 16S rRNA where it nucleates assembly of the head domain of the 30S subunit. Is located at the subunit interface close to the decoding center, probably blocks exit of the E-site tRNA. The chain is Small ribosomal subunit protein uS7 from Fervidobacterium nodosum (strain ATCC 35602 / DSM 5306 / Rt17-B1).